A 707-amino-acid chain; its full sequence is Lipase maturation factor 2 (707 aa).

9 helical membrane-spanning segments follow: residues 11–31 (FLWGLSGIYLVAFVSLYAQIP), 78–98 (MEMICLLGALLSLGALLFSFL), 102–122 (LVFLLLWIFYLSLYQVGQVFL), 126–146 (WDSLLLETGFLAVLVAPVHAL), 220–240 (FSVVATYFIEIGVPLLFFLPF), 256–276 (ILIIMTGNYNFFNLLTVVLCC), 306–326 (LYSLISLLDVPIFGLLVFWTV), 358–378 (ITFPTIWIAAASLGWEILKGM), and 398–418 (VIFSCAAVAMFTISLVPYTYI). N483 carries N-linked (GlcNAc...) asparagine glycosylation. A helical transmembrane segment spans residues 634–654 (LLLHSFIFGIFTIYFLQAMFG). The segment at 659 to 707 (PGVAKQRHSKPPNEKKKQKSNSGQGESAAAKSSGHGADTVRRNKKNEKS) is disordered. The span at 696–707 (DTVRRNKKNEKS) shows a compositional bias: basic and acidic residues.

This sequence belongs to the lipase maturation factor family.

Its subcellular location is the endoplasmic reticulum membrane. In terms of biological role, involved in the maturation of specific proteins in the endoplasmic reticulum. The protein is Lipase maturation factor 2 (lmf2) of Xenopus tropicalis (Western clawed frog).